A 985-amino-acid chain; its full sequence is Cation channel sperm-associated auxiliary subunit epsilon (985 aa).

The signal sequence occupies residues Met1–Val35. The Extracellular segment spans residues Val36–Ser937. Intrachain disulfides connect Cys87/Cys101, Cys130/Cys235, Cys275/Cys365, and Cys439/Cys442. Asn91, Asn143, and Asn292 each carry an N-linked (GlcNAc...) asparagine glycan. Residues Asn502, Asn517, and Asn565 are each glycosylated (N-linked (GlcNAc...) asparagine). Cystine bridges form between Cys617/Cys724, Cys737/Cys919, Cys753/Cys786, and Cys838/Cys869. The N-linked (GlcNAc...) asparagine glycan is linked to Asn749. A glycan (N-linked (GlcNAc...) asparagine) is linked at Asn830. 3 N-linked (GlcNAc...) asparagine glycosylation sites follow: Asn888, Asn915, and Asn920. The helical transmembrane segment at Val938–Leu958 threads the bilayer. At Ser959–Asn985 the chain is on the cytoplasmic side.

The protein belongs to the CATSPERD family. Component of the CatSper complex or CatSpermasome composed of the core pore-forming members CATSPER1, CATSPER2, CATSPER3 and CATSPER4 as well as auxiliary members CATSPERB, CATSPERG2, CATSPERD, CATSPERE, CATSPERZ, C2CD6/CATSPERT, SLCO6C1, TMEM249, TMEM262 and EFCAB9. HSPA1 may be an additional auxiliary complex member. The core complex members CATSPER1, CATSPER2, CATSPER3 and CATSPER4 form a heterotetrameric channel. The auxiliary CATSPERB, CATSPERG2, CATSPERD and CATSPERE subunits form a pavilion-like structure over the pore which stabilizes the complex through interactions with CATSPER4, CATSPER3, CATSPER1 and CATSPER2 respectively. SLCO6C1 interacts with CATSPERE and TMEM262/CATSPERH interacts with CATSPERB, further stabilizing the complex. C2CD6/CATSPERT interacts at least with CATSPERD and is required for targeting the CatSper complex in the flagellar membrane. As to expression, testis-specific.

The protein resides in the cell projection. It is found in the cilium. It localises to the flagellum membrane. In terms of biological role, auxiliary component of the CatSper complex, a complex involved in sperm cell hyperactivation. Sperm cell hyperactivation is needed for sperm motility which is essential late in the preparation of sperm for fertilization. This is Cation channel sperm-associated auxiliary subunit epsilon from Mus musculus (Mouse).